A 943-amino-acid chain; its full sequence is Isoleucine--tRNA ligase (943 aa).

The short motif at 58 to 68 (PYANGKIHIGH) is the 'HIGH' region element. L-isoleucyl-5'-AMP is bound at residue Glu567. The 'KMSKS' region signature appears at 608–612 (KMSKS). Position 611 (Lys611) interacts with ATP. Zn(2+)-binding residues include Cys906, Cys909, Cys926, and Cys929.

This sequence belongs to the class-I aminoacyl-tRNA synthetase family. IleS type 1 subfamily. Monomer. Zn(2+) is required as a cofactor.

It is found in the cytoplasm. It carries out the reaction tRNA(Ile) + L-isoleucine + ATP = L-isoleucyl-tRNA(Ile) + AMP + diphosphate. Catalyzes the attachment of isoleucine to tRNA(Ile). As IleRS can inadvertently accommodate and process structurally similar amino acids such as valine, to avoid such errors it has two additional distinct tRNA(Ile)-dependent editing activities. One activity is designated as 'pretransfer' editing and involves the hydrolysis of activated Val-AMP. The other activity is designated 'posttransfer' editing and involves deacylation of mischarged Val-tRNA(Ile). The chain is Isoleucine--tRNA ligase from Pseudomonas putida (strain ATCC 47054 / DSM 6125 / CFBP 8728 / NCIMB 11950 / KT2440).